The chain runs to 226 residues: UPF0758 protein Daci_1904 (226 aa).

The MPN domain occupies 104 to 226; that stretch reads ALASPEAVAR…SLSMAGQGML (123 aa). The Zn(2+) site is built by H175, H177, and D188. Residues 175–188 carry the JAMM motif motif; it reads HNHPSGQVQASAAD.

The protein belongs to the UPF0758 family.

This chain is UPF0758 protein Daci_1904, found in Delftia acidovorans (strain DSM 14801 / SPH-1).